The chain runs to 477 residues: TNF receptor-associated factor family protein DDB_G0278133 (477 aa).

An RING-type; degenerate zinc finger spans residues Cys-45–Lys-88. 2 consecutive TRAF-type zinc fingers follow at residues Asn-160 to Ser-211 and Asp-212 to Gln-267. Positions Leu-271–Ser-326 form a coiled coil. One can recognise an MATH domain in the interval Val-331–Ile-463.

This sequence belongs to the TNF receptor-associated factor family. A subfamily.

The protein localises to the cytoplasm. In terms of biological role, probable adapter protein and signal transducer that links members of the tumor necrosis factor receptor family to different signaling pathways by association with the receptor cytoplasmic domain and kinases. The protein is TNF receptor-associated factor family protein DDB_G0278133 of Dictyostelium discoideum (Social amoeba).